The chain runs to 167 residues: Photosystem I assembly protein Ycf3 (167 aa).

TPR repeat units lie at residues 35–68, 72–105, and 120–153; these read AFTYYRDGMSAQSEGEYAEALQNYYEAMRLEIDP, SYILYNIGLIHTSNGEHAKAIEYYLQALERNPSL, and GEQAVEKEDLETSEAWFDQAADYWKQAIALAPNN.

Belongs to the Ycf3 family.

The protein resides in the plastid. It is found in the chloroplast thylakoid membrane. Essential for the assembly of the photosystem I (PSI) complex. May act as a chaperone-like factor to guide the assembly of the PSI subunits. This Zygnema circumcarinatum (Green alga) protein is Photosystem I assembly protein Ycf3.